Consider the following 348-residue polypeptide: UDP-glucose 4-epimerase (348 aa).

Thr-125 is a substrate binding site. Tyr-149 acts as the Proton acceptor in catalysis.

Belongs to the NAD(P)-dependent epimerase/dehydratase family. The cofactor is NAD(+).

The catalysed reaction is UDP-alpha-D-glucose = UDP-alpha-D-galactose. It participates in carbohydrate metabolism; galactose metabolism. Its pathway is glycan metabolism; exopolysaccharide biosynthesis. In Azospirillum brasilense, this protein is UDP-glucose 4-epimerase (exoB).